Reading from the N-terminus, the 245-residue chain is Probable phosphatase CKO_02035 (245 aa).

Zn(2+) contacts are provided by H7, H9, H15, H40, E73, H101, H131, D192, and H194.

The protein belongs to the PHP family. As to quaternary structure, homotrimer. Zn(2+) serves as cofactor.

This Citrobacter koseri (strain ATCC BAA-895 / CDC 4225-83 / SGSC4696) protein is Probable phosphatase CKO_02035.